A 370-amino-acid polypeptide reads, in one-letter code: Cathepsin B-like cysteine proteinase 3 (370 aa).

An N-terminal signal peptide occupies residues 1–16 (MLKVYFLALFLAGCSA). The propeptide occupies 17–91 (FVLDEIRGIN…FVRGEIVPEP (75 aa)). Disulfide bonds link Cys-105–Cys-134, Cys-117–Cys-162, Cys-153–Cys-210, Cys-154–Cys-158, Cys-190–Cys-214, and Cys-198–Cys-202. Residue Cys-120 is part of the active site. An N-linked (GlcNAc...) asparagine glycan is attached at Asn-138. Catalysis depends on residues His-284 and Asn-304.

The protein belongs to the peptidase C1 family.

This Caenorhabditis elegans protein is Cathepsin B-like cysteine proteinase 3 (cpr-3).